Consider the following 79-residue polypeptide: Cytochrome b (79 aa).

A run of 3 helical transmembrane segments spans residues 1–7 (TALLLAA), 31–52 (WLIR…YLHI), and 67–79 (WNIG…TLMA). The heme b site is built by His-37 and His-51.

It belongs to the cytochrome b family. As to quaternary structure, the cytochrome bc1 complex contains 11 subunits: 3 respiratory subunits (MT-CYB, CYC1 and UQCRFS1), 2 core proteins (UQCRC1 and UQCRC2) and 6 low-molecular weight proteins (UQCRH/QCR6, UQCRB/QCR7, UQCRQ/QCR8, UQCR10/QCR9, UQCR11/QCR10 and a cleavage product of UQCRFS1). This cytochrome bc1 complex then forms a dimer. Heme b serves as cofactor.

It is found in the mitochondrion inner membrane. Its function is as follows. Component of the ubiquinol-cytochrome c reductase complex (complex III or cytochrome b-c1 complex) that is part of the mitochondrial respiratory chain. The b-c1 complex mediates electron transfer from ubiquinol to cytochrome c. Contributes to the generation of a proton gradient across the mitochondrial membrane that is then used for ATP synthesis. This chain is Cytochrome b (MT-CYB), found in Pomatostomus superciliosus (White-browed babbler).